Here is a 275-residue protein sequence, read N- to C-terminus: Methylglyoxal reductase DkgA (275 aa).

Residue Tyr51 is the Proton donor of the active site. His107 contributes to the substrate binding site. 187–241 (SPLAQGGKGVFDQKVIRDLADKYGKTPAQIVIRWHLDSGLVVIPKSVTPSRIAEN) is an NADP(+) binding site.

Belongs to the aldo/keto reductase family. Monomer.

It is found in the cytoplasm. The catalysed reaction is hydroxyacetone + NADP(+) = methylglyoxal + NADPH + H(+). Its function is as follows. Aldo-keto reductase that significantly contributes to cellular methylglyoxal detoxification by catalyzing the NADPH-dependent conversion of methylglyoxal to acetol. The sequence is that of Methylglyoxal reductase DkgA from Escherichia coli O157:H7.